Here is a 205-residue protein sequence, read N- to C-terminus: Recombination protein RecR (205 aa).

Residues 59–74 (CSVCFHLSAEPVCEVC) form a C4-type zinc finger. The 100-residue stretch at 82–181 (GTLCVVADSR…KVTRIAFGLP (100 aa)) folds into the Toprim domain.

The protein belongs to the RecR family.

Its function is as follows. May play a role in DNA repair. It seems to be involved in an RecBC-independent recombinational process of DNA repair. It may act with RecF and RecO. This is Recombination protein RecR from Cyanothece sp. (strain PCC 7425 / ATCC 29141).